The primary structure comprises 188 residues: UPF0398 protein ABC2016 (188 aa).

The protein belongs to the UPF0398 family.

This Shouchella clausii (strain KSM-K16) (Alkalihalobacillus clausii) protein is UPF0398 protein ABC2016.